A 221-amino-acid chain; its full sequence is MSTAARKIRLLMLLRRNGVSDTGVLRAIEMIPREVFVPPTFHDQAYEDTALPIGHGQTISQPLVVGLMTQVLDLHDRLRVLEIGTGSGYQAAVLSRIVRRVYTIERHRPLLMEAERRFNTLRLHNITARLGDGMRGWPEAAPFERILVTAGGGAEPPADLVKQLAVGGVMVIPLGPDRREQRVVRLRRTESGLAREDLWPVRFVPLLPDVAPEAPRAERAS.

S60 is an active-site residue.

This sequence belongs to the methyltransferase superfamily. L-isoaspartyl/D-aspartyl protein methyltransferase family.

It localises to the cytoplasm. The enzyme catalyses [protein]-L-isoaspartate + S-adenosyl-L-methionine = [protein]-L-isoaspartate alpha-methyl ester + S-adenosyl-L-homocysteine. Functionally, catalyzes the methyl esterification of L-isoaspartyl residues in peptides and proteins that result from spontaneous decomposition of normal L-aspartyl and L-asparaginyl residues. It plays a role in the repair and/or degradation of damaged proteins. The polypeptide is Protein-L-isoaspartate O-methyltransferase (Rhodospirillum centenum (strain ATCC 51521 / SW)).